The sequence spans 426 residues: 3-phosphoshikimate 1-carboxyvinyltransferase (426 aa).

The 3-phosphoshikimate site is built by Lys-22, Ser-23, and Arg-27. Residue Lys-22 participates in phosphoenolpyruvate binding. Phosphoenolpyruvate is bound by residues Gly-96 and Arg-124. 3-phosphoshikimate is bound by residues Ser-170, Ser-171, Gln-172, Ser-198, Asp-314, Asn-337, and Lys-341. A phosphoenolpyruvate-binding site is contributed by Gln-172. Asp-314 (proton acceptor) is an active-site residue. Phosphoenolpyruvate contacts are provided by Arg-345, Arg-387, and Lys-412.

Belongs to the EPSP synthase family. As to quaternary structure, monomer.

It is found in the cytoplasm. It carries out the reaction 3-phosphoshikimate + phosphoenolpyruvate = 5-O-(1-carboxyvinyl)-3-phosphoshikimate + phosphate. It functions in the pathway metabolic intermediate biosynthesis; chorismate biosynthesis; chorismate from D-erythrose 4-phosphate and phosphoenolpyruvate: step 6/7. Catalyzes the transfer of the enolpyruvyl moiety of phosphoenolpyruvate (PEP) to the 5-hydroxyl of shikimate-3-phosphate (S3P) to produce enolpyruvyl shikimate-3-phosphate and inorganic phosphate. The polypeptide is 3-phosphoshikimate 1-carboxyvinyltransferase (Shewanella woodyi (strain ATCC 51908 / MS32)).